A 294-amino-acid chain; its full sequence is Probable 2-(5''-triphosphoribosyl)-3'-dephosphocoenzyme-A synthase (294 aa).

Belongs to the CitG/MdcB family.

It catalyses the reaction 3'-dephospho-CoA + ATP = 2'-(5''-triphospho-alpha-D-ribosyl)-3'-dephospho-CoA + adenine. In Streptococcus equi subsp. zooepidemicus (strain H70), this protein is Probable 2-(5''-triphosphoribosyl)-3'-dephosphocoenzyme-A synthase.